Here is a 176-residue protein sequence, read N- to C-terminus: Nucleoside triphosphate/diphosphate phosphatase (176 aa).

The Proton donor role is filled by Arg-23. The Mg(2+) site is built by Asn-87, Asp-103, Asp-105, Asp-107, Asp-120, and Glu-123.

This sequence belongs to the Ntdp family. Mg(2+) serves as cofactor.

It catalyses the reaction a ribonucleoside 5'-triphosphate + H2O = a ribonucleoside 5'-diphosphate + phosphate + H(+). The catalysed reaction is a ribonucleoside 5'-diphosphate + H2O = a ribonucleoside 5'-phosphate + phosphate + H(+). In terms of biological role, has nucleoside phosphatase activity towards nucleoside triphosphates and nucleoside diphosphates. The protein is Nucleoside triphosphate/diphosphate phosphatase of Bacillus mycoides (strain KBAB4) (Bacillus weihenstephanensis).